The chain runs to 1658 residues: MSKKKETFTPRANKLKLTTPRRKLKILSSLLDADEDSKMKDQHGYSRVHNDKYRVAKPTQHSTLHESISSRRSSHIHNKSLHEDSARALSWVDSLINRGKSILTTLEKEDALFERSLEEERQRFQLHDSLMNKYTGNSKSHQRLIDLRKSQYGTDTSFQNNDEIPLDSFISSPLPDAEDESSSNIDSDKDEDLEGKQSLIKDFDLENDEYELSEEEKNSDGQSSPSIMILSDEEYAEEGALQDVSNDEYAEEEGQVERKNIGQEQANVENATQISSSDSSEGQNYSEGVEMELEDDIDVESDAEKDESQGAEGTEHSVDFSKYMQPRTDNTKIPVIEKYESDEHKVHQRYSEDGAFDFGSVNISVDDESEDEESQAESYSANAENVYHHNEHELDDKELIEDIESSDSESQSAQESEQGSEDDFEYKMKNEKSTSEETENTSESRDQGFAKDAYTKNKVEQQENDEEPEKDDIIRSSLDKNFHGNNNKSEYSENVLENETDPAIVERENQINDVEGYDVTGKSVESDLHEHSPDNLYDLAARAMLQFQQSRNSNCPQKEEQVSESYLGHSNGSNLSGRSLDESEEQIPLKDFTGENNNNLKTDRGDLSSSVEIEVEKVSEKKLDGSTEKELVPLSTDTTINNSSLGNEDSIYYSLDDADAISENLTDVPLMEIKTTPKYEVVISESVYSSTSYEDNTVAMPPQVEYTSPFMNDPFNSLNDDYEKKHDLLKSTLAALAPAFTKKDAEFVEAGVTKSCLTSTSGHTNIFHTSKETKQVSDLDESTENVTFENENTGDENKNQSKNFPGVANSTDKSTEDNTDEKYFSAINYTNVTGDSSCEDIIETASNVEENLRYCEKDMNEAEMSSGDECVKQNDDGSKTQISFSTDSPDNFQESNDNTEFSSTKYKVRNSDLEDDESLKKELTKAEVVDKLDEEESEDSYEQDYADPEPGNDEGSNENIVKGTKKDTLGIVEPENEKVNKVHEEETLFEANVSSSVNVQNKDMHTDVINQEAQANYEAGERKYYIQNTDTEEAHISIIERIDENAIGNNMEIPERSCVEKTHNEVLFERRATTIENTKALENNTNMHDQVSQACSDSDRDQDSTAEKNVEGSAKHNLDIRVSSSEIESVEPLKPESDRSNIFSSPIRVIGAVVKGVGKVVDVAESFVKKIDVMDSESDDNVDIGDYNQDIFNKSNSTDASVNMKSVSSKERDSDEDEAVILGGVTAEAHNDNGNNSRVINIDPTTNGAYEEDSEVFRQQVKDKENLHKSEEPLVEGLQSEQHFEKKDHSENEEEFDTIYGDITSANIHSNAPDDIKRQQLLKNLSDLENYSQRLIEDSRRGKNQEESDEVNTSRERDLTFEKSVNEKYAGAIEEDTFSELDISIQHPEHEEDLDLSNNQERSIEELNSEPEEAELYELEIEGPTETAASSKMNDDERQRGNIPSTDLPSDPPSDKEEVTDSYPYSNSENITAEKSAPTSPEVYEIFSDTPNEVPMEINDEIPATTLEKHDKTNVTSVLDDRSEHLSSHDVDNEPHDNSINIKVNEGEEPEHQAVDIPVKVEVKEEQEEMPSKSVLEEQKPSMELINDKSSPENNNDEETNREKDKTKAKKKSRKRNYNSRRRKRKITEGSSAASNTKRRRGHEPKSRGQNTHPSVDK.

A compositionally biased stretch (basic and acidic residues) spans 36 to 54; it reads DSKMKDQHGYSRVHNDKYR. Disordered regions lie at residues 36–76 and 156–499; these read DSKM…SSHI and TSFQ…LENE. 2 stretches are compositionally biased toward acidic residues: residues 205–214 and 245–254; these read LENDEYELSE and SNDEYAEEEG. The span at 262 to 286 shows a compositional bias: polar residues; sequence GQEQANVENATQISSSDSSEGQNYS. Residues 289-305 show a composition bias toward acidic residues; it reads VEMELEDDIDVESDAEK. Residues 335–352 are compositionally biased toward basic and acidic residues; that stretch reads VIEKYESDEHKVHQRYSE. Positions 365-375 are enriched in acidic residues; that stretch reads VDDESEDEESQ. The segment covering 386–397 has biased composition (basic and acidic residues); sequence VYHHNEHELDDK. Residues 398-407 are compositionally biased toward acidic residues; the sequence is ELIEDIESSD. Residues 408 to 417 show a composition bias toward low complexity; that stretch reads SESQSAQESE. Basic and acidic residues-rich tracts occupy residues 425-435, 442-461, and 471-482; these read EYKMKNEKSTS, SESR…KVEQ, and DDIIRSSLDKNF. Residue T500 is modified to Phosphothreonine. Phosphoserine is present on S532. 2 disordered regions span residues 550–584 and 589–608; these read SRNS…DESE and LKDF…GDLS. The span at 568 to 577 shows a compositional bias: polar residues; that stretch reads GHSNGSNLSG. 4 positions are modified to phosphoserine: S579, S583, S608, and S662. 3 disordered regions span residues 770 to 819, 863 to 964, and 1082 to 1115; these read SKET…EDNT, EMSS…VKGT, and ENNT…GSAK. Positions 800–812 are enriched in polar residues; the sequence is QSKNFPGVANSTD. A phosphoserine mark is found at S865 and S866. Residues 869 to 878 are compositionally biased toward basic and acidic residues; the sequence is ECVKQNDDGS. Over residues 879-905 the composition is skewed to polar residues; the sequence is KTQISFSTDSPDNFQESNDNTEFSSTK. A phosphoserine mark is found at S888 and S911. Residues 918 to 931 show a composition bias toward basic and acidic residues; sequence SLKKELTKAEVVDK. The span at 932-956 shows a compositional bias: acidic residues; the sequence is LDEEESEDSYEQDYADPEPGNDEGS. S937, S1092, S1096, S1098, S1166, S1176, and S1178 each carry phosphoserine. Residues 1082-1096 are compositionally biased toward polar residues; that stretch reads ENNTNMHDQVSQACS. The span at 1097 to 1115 shows a compositional bias: basic and acidic residues; it reads DSDRDQDSTAEKNVEGSAK. The span at 1197–1207 shows a compositional bias: polar residues; it reads STDASVNMKSV. Positions 1197–1216 are disordered; sequence STDASVNMKSVSSKERDSDE. 2 positions are modified to phosphoserine: S1214 and S1254. The segment covering 1261 to 1272 has biased composition (basic and acidic residues); that stretch reads VKDKENLHKSEE. A disordered region spans residues 1261–1315; that stretch reads VKDKENLHKSEEPLVEGLQSEQHFEKKDHSENEEEFDTIYGDITSANIHSNAPDD. 3 positions are modified to phosphoserine: S1290, S1326, and S1332. Disordered regions lie at residues 1334-1482 and 1503-1658; these read RLIE…TSPE and PATT…SVDK. Residues 1335 to 1366 show a composition bias toward basic and acidic residues; it reads LIEDSRRGKNQEESDEVNTSRERDLTFEKSVN. Residues S1403, S1409, S1450, and S1454 each carry the phosphoserine modification. The span at 1407–1423 shows a compositional bias: acidic residues; that stretch reads LNSEPEEAELYELEIEG. Residues 1463–1479 show a composition bias toward polar residues; that stretch reads YPYSNSENITAEKSAPT. Over residues 1507 to 1537 the composition is skewed to basic and acidic residues; it reads LEKHDKTNVTSVLDDRSEHLSSHDVDNEPHD. At S1539 the chain carries Phosphoserine. Composition is skewed to basic and acidic residues over residues 1550–1564 and 1575–1591; these read PEHQ…VEVK and VLEE…DKSS. 2 positions are modified to phosphoserine: S1590 and S1591. Over residues 1607–1626 the composition is skewed to basic residues; that stretch reads TKAKKKSRKRNYNSRRRKRK. Positions 1648-1658 are enriched in polar residues; the sequence is RGQNTHPSVDK.

As to quaternary structure, interacts with SIR4.

The protein localises to the nucleus. Functionally, involved in the clustering of telomeres at the nuclear periphery, forming discrete subcompartments that accumulate a complex of histone-binding silencing factors like SIR4. Required for SIR4-mediated anchoring and partitioning of plasmids. The chain is Silent chromatin protein ESC1 (ESC1) from Saccharomyces cerevisiae (strain ATCC 204508 / S288c) (Baker's yeast).